The primary structure comprises 389 residues: Succinate--CoA ligase [ADP-forming] subunit beta (389 aa).

Residues 9-244 (KQLLAEYGIP…KTQEDPTEVI (236 aa)) enclose the ATP-grasp domain. ATP is bound by residues Lys46, 53–55 (GRG), Gly102, and Glu107. Residues Asn199 and Asp213 each contribute to the Mg(2+) site. Substrate-binding positions include Asn264 and 321–323 (GIV).

This sequence belongs to the succinate/malate CoA ligase beta subunit family. In terms of assembly, heterotetramer of two alpha and two beta subunits. The cofactor is Mg(2+).

The enzyme catalyses succinate + ATP + CoA = succinyl-CoA + ADP + phosphate. The catalysed reaction is GTP + succinate + CoA = succinyl-CoA + GDP + phosphate. Its pathway is carbohydrate metabolism; tricarboxylic acid cycle; succinate from succinyl-CoA (ligase route): step 1/1. Its function is as follows. Succinyl-CoA synthetase functions in the citric acid cycle (TCA), coupling the hydrolysis of succinyl-CoA to the synthesis of either ATP or GTP and thus represents the only step of substrate-level phosphorylation in the TCA. The beta subunit provides nucleotide specificity of the enzyme and binds the substrate succinate, while the binding sites for coenzyme A and phosphate are found in the alpha subunit. In Stenotrophomonas maltophilia (strain R551-3), this protein is Succinate--CoA ligase [ADP-forming] subunit beta.